The following is a 255-amino-acid chain: MRILCTNDDGIHAPGLKTVEQIARAISDDVWVVAPELDQSGVSHSLSLNDPLRLREVGPRHFAVRGTPTDCVIMGSRFILKDKAPDLVLSGVNRGRNVAEDVVYSGTIAGALEGTILGLPSFALSQEFTIETRNAPLWETARTHAPDIIRKVMAAGVPKNTVVNINFPACTPDKVKGVVVTRQGKRNPGFLRIDERHDGRGNPYYWIGFERIKVEDMPAEGTDLAALAANFVSVTPLKLDRTDETFSAALANTLA.

The a divalent metal cation site is built by D8, D9, S40, and N93.

Belongs to the SurE nucleotidase family. Requires a divalent metal cation as cofactor.

It is found in the cytoplasm. The enzyme catalyses a ribonucleoside 5'-phosphate + H2O = a ribonucleoside + phosphate. Functionally, nucleotidase that shows phosphatase activity on nucleoside 5'-monophosphates. This Rhodopseudomonas palustris (strain ATCC BAA-98 / CGA009) protein is 5'-nucleotidase SurE.